Here is a 295-residue protein sequence, read N- to C-terminus: 4-hydroxy-tetrahydrodipicolinate synthase (295 aa).

A pyruvate-binding site is contributed by Thr47. Residue Tyr135 is the Proton donor/acceptor of the active site. Lys163 serves as the catalytic Schiff-base intermediate with substrate. Ile204 provides a ligand contact to pyruvate.

It belongs to the DapA family. As to quaternary structure, homotetramer; dimer of dimers.

The protein localises to the cytoplasm. The enzyme catalyses L-aspartate 4-semialdehyde + pyruvate = (2S,4S)-4-hydroxy-2,3,4,5-tetrahydrodipicolinate + H2O + H(+). The protein operates within amino-acid biosynthesis; L-lysine biosynthesis via DAP pathway; (S)-tetrahydrodipicolinate from L-aspartate: step 3/4. Catalyzes the condensation of (S)-aspartate-beta-semialdehyde [(S)-ASA] and pyruvate to 4-hydroxy-tetrahydrodipicolinate (HTPA). The sequence is that of 4-hydroxy-tetrahydrodipicolinate synthase from Caldicellulosiruptor bescii (strain ATCC BAA-1888 / DSM 6725 / KCTC 15123 / Z-1320) (Anaerocellum thermophilum).